The primary structure comprises 406 residues: MIIGNCLILKDFSSEPFWGAVEIENGTIKRVLQGEVKVDLDLSGKLVMPALFNTHTHAPMTLLRGVAEDLSFEEWLFSKVLPIEDRLTEKMAYYGTILAQMEMARHGIAGFVDMYFHEEWIAKAVRDFGMRALLTRGLVDSNGDDGGRLEENLKLYNEWNGFEGRIFVGFGPHSPYLCSEEYLKRVFDTAKSLNAPVTIHLYETSKEEYDLEDILNIGLKEVKTIAAHCVHLPERYFGVLKDIPFFVSHNPASNLKLGNGIAPVQRMIEHGMKVTLGTDGAASNNSLNLFFEMRLASLLQKAQNPRNLDVNTCLKMVTYDGAQAMGFKSGKIEEGWNADLVVIDLDLPEMFPVQNIKNHLVHAFSGEVFATMVAGKWIYFDGEYPTIDSEEVKRELARIEKELYSS.

Positions 55 and 57 each coordinate Zn(2+). The substrate site is built by Glu84, Arg136, Arg148, and His173. His200 serves as a coordination point for Zn(2+). Residues Glu203 and Asp279 each coordinate substrate. A Zn(2+)-binding site is contributed by Asp279.

The protein belongs to the metallo-dependent hydrolases superfamily. MTA/SAH deaminase family. Requires Zn(2+) as cofactor.

It carries out the reaction S-adenosyl-L-homocysteine + H2O + H(+) = S-inosyl-L-homocysteine + NH4(+). The catalysed reaction is S-methyl-5'-thioadenosine + H2O + H(+) = S-methyl-5'-thioinosine + NH4(+). Its function is as follows. Catalyzes the deamination of 5-methylthioadenosine and S-adenosyl-L-homocysteine into 5-methylthioinosine and S-inosyl-L-homocysteine, respectively. Is also able to deaminate adenosine. Adenosine-5-monophosphate (AMP) and S-adenosyl-L-methionine (SAM) are not enzyme substrates. The polypeptide is 5-methylthioadenosine/S-adenosylhomocysteine deaminase (mtaD) (Thermotoga maritima (strain ATCC 43589 / DSM 3109 / JCM 10099 / NBRC 100826 / MSB8)).